The sequence spans 273 residues: Ribosomal RNA small subunit methyltransferase A (273 aa).

The S-adenosyl-L-methionine site is built by N18, L20, G45, E66, D91, and N113.

It belongs to the class I-like SAM-binding methyltransferase superfamily. rRNA adenine N(6)-methyltransferase family. RsmA subfamily.

It is found in the cytoplasm. It catalyses the reaction adenosine(1518)/adenosine(1519) in 16S rRNA + 4 S-adenosyl-L-methionine = N(6)-dimethyladenosine(1518)/N(6)-dimethyladenosine(1519) in 16S rRNA + 4 S-adenosyl-L-homocysteine + 4 H(+). In terms of biological role, specifically dimethylates two adjacent adenosines (A1518 and A1519) in the loop of a conserved hairpin near the 3'-end of 16S rRNA in the 30S particle. May play a critical role in biogenesis of 30S subunits. This is Ribosomal RNA small subunit methyltransferase A from Klebsiella pneumoniae subsp. pneumoniae (strain ATCC 700721 / MGH 78578).